Consider the following 692-residue polypeptide: Alpha-amylase SusG (692 aa).

Positions 1-22 (MNKHLHFLSLLWLSMLMAFMTA) are cleaved as a signal peptide. Cys-23 carries N-palmitoyl cysteine lipidation. A lipid anchor (S-diacylglycerol cysteine) is attached at Cys-23. Residues Asp-73, Asp-75, Asp-77, Tyr-79, and Asp-81 each contribute to the Mg(2+) site. Position 153 (Asn-153) interacts with Ca(2+). Starch binding stretches follow at residues His-154, 260–263 (YYGE), and 330–333 (NIMF). Residue Asp-352 coordinates Ca(2+). A starch binding region spans residues 386 to 392 (RLDAVKH). The active-site Nucleophile is the Asp-388. His-392 is a binding site for Ca(2+). The Proton donor role is filled by Glu-431. 2 regions of interest (starch binding) are found at residues Asp-437 and Arg-457.

Belongs to the glycosyl hydrolase 13 family. Monomer. The cofactor is Ca(2+).

Its subcellular location is the cell outer membrane. It catalyses the reaction Endohydrolysis of (1-&gt;4)-alpha-D-glucosidic linkages in polysaccharides containing three or more (1-&gt;4)-alpha-linked D-glucose units.. It functions in the pathway glycan degradation; starch degradation. Functionally, alpha-amylase that cleaves starch into oligosaccharides before internalization for degradation, the first step in starch degradation. In Bacteroides thetaiotaomicron (strain ATCC 29148 / DSM 2079 / JCM 5827 / CCUG 10774 / NCTC 10582 / VPI-5482 / E50), this protein is Alpha-amylase SusG (susG).